Here is a 401-residue protein sequence, read N- to C-terminus: Acetate kinase (401 aa).

Residue N9 coordinates Mg(2+). K16 is an ATP binding site. R88 is a binding site for substrate. D147 (proton donor/acceptor) is an active-site residue. ATP contacts are provided by residues 207 to 211, 282 to 284, and 333 to 337; these read HLGNG, DCR, and GIGEN. E388 is a binding site for Mg(2+).

It belongs to the acetokinase family. Homodimer. The cofactor is Mg(2+). Requires Mn(2+) as cofactor.

The protein resides in the cytoplasm. The catalysed reaction is acetate + ATP = acetyl phosphate + ADP. Its pathway is metabolic intermediate biosynthesis; acetyl-CoA biosynthesis; acetyl-CoA from acetate: step 1/2. Its function is as follows. Catalyzes the formation of acetyl phosphate from acetate and ATP. Can also catalyze the reverse reaction. The protein is Acetate kinase of Haemophilus influenzae (strain ATCC 51907 / DSM 11121 / KW20 / Rd).